Reading from the N-terminus, the 98-residue chain is Aspartyl/glutamyl-tRNA(Asn/Gln) amidotransferase subunit C (98 aa).

Belongs to the GatC family. As to quaternary structure, heterotrimer of A, B and C subunits.

The enzyme catalyses L-glutamyl-tRNA(Gln) + L-glutamine + ATP + H2O = L-glutaminyl-tRNA(Gln) + L-glutamate + ADP + phosphate + H(+). It catalyses the reaction L-aspartyl-tRNA(Asn) + L-glutamine + ATP + H2O = L-asparaginyl-tRNA(Asn) + L-glutamate + ADP + phosphate + 2 H(+). In terms of biological role, allows the formation of correctly charged Asn-tRNA(Asn) or Gln-tRNA(Gln) through the transamidation of misacylated Asp-tRNA(Asn) or Glu-tRNA(Gln) in organisms which lack either or both of asparaginyl-tRNA or glutaminyl-tRNA synthetases. The reaction takes place in the presence of glutamine and ATP through an activated phospho-Asp-tRNA(Asn) or phospho-Glu-tRNA(Gln). The protein is Aspartyl/glutamyl-tRNA(Asn/Gln) amidotransferase subunit C of Acidothermus cellulolyticus (strain ATCC 43068 / DSM 8971 / 11B).